The following is a 319-amino-acid chain: Beta-xylosidase (319 aa).

The active-site Proton acceptor is the D14. E222 functions as the Proton donor in the catalytic mechanism.

The protein belongs to the glycosyl hydrolase 43 family.

The enzyme catalyses Hydrolysis of (1-&gt;4)-beta-D-xylans, to remove successive D-xylose residues from the non-reducing termini.. In terms of biological role, exoxylanase capable of acting on certain xylans and xylooligosaccharides. The protein is Beta-xylosidase (xynB) of Xylanibacter ruminicola (Prevotella ruminicola).